The primary structure comprises 142 residues: 3-hydroxyacyl-[acyl-carrier-protein] dehydratase FabZ (142 aa).

Residue histidine 46 is part of the active site.

Belongs to the thioester dehydratase family. FabZ subfamily.

It localises to the cytoplasm. The enzyme catalyses a (3R)-hydroxyacyl-[ACP] = a (2E)-enoyl-[ACP] + H2O. Involved in unsaturated fatty acids biosynthesis. Catalyzes the dehydration of short chain beta-hydroxyacyl-ACPs and long chain saturated and unsaturated beta-hydroxyacyl-ACPs. The polypeptide is 3-hydroxyacyl-[acyl-carrier-protein] dehydratase FabZ (Thermus thermophilus (strain ATCC BAA-163 / DSM 7039 / HB27)).